Reading from the N-terminus, the 721-residue chain is Leucine-rich repeat flightless-interacting protein 2 (721 aa).

Positions 1-370 (MGTPASGRKR…YMQGLKELKE (370 aa)) are DVL3-binding. Ser18 is subject to Phosphoserine. The stretch at 22 to 49 (EALSNIAREAEARLAAKRAARAEARDIR) forms a coiled coil. Residues Gly96, Leu101, Tyr168, Ser173, Ser190, and Ser202 each carry the phosphoserine modification. 2 disordered regions span residues 232-262 (SARSSPGFTNDDTASIVSSDRASRGRRESVV) and 295-338 (KSDK…IDPD). Composition is skewed to polar residues over residues 237 to 251 (PGFTNDDTASIVSSD) and 305 to 338 (TRPSSRNSASATTPLSGNSSRRGSGDTSSLIDPD). Residues Ser309, Ser312, Ser320, Ser324, and Ser328 each carry the phosphoserine modification. Thr331 bears the Phosphothreonine mark. Phosphoserine is present on residues Ser332 and Ser333. Coiled coils occupy residues 349 to 524 (DLKD…GEKH) and 566 to 714 (LDVR…KANR).

The protein belongs to the LRRFIP family. Interacts (via N-terminus) with DVL3. Interacts with FLII. Weakly interacts with MYD88 in resting cells. Following LPS-stimulation, the interaction with MYD88 is rapidly enhanced; the complex gradually dissociates to basal levels after 6 hours of stimulation. Interaction with MYD88 is regulated by LPS-induced phosphorylation at Ser-202. In the presence of LPS, competes with FLII for MYD88-binding. Ser-190 and Ser-202 are phosphorylated in response to LPS stimulation. Ser-202 phosphorylation regulates the LPS-induced interaction with MYD88. Widely expressed, with highest levels in heart and skeletal muscle.

Its function is as follows. May function as activator of the canonical Wnt signaling pathway, in association with DVL3, upstream of CTNNB1/beta-catenin. Positively regulates Toll-like receptor (TLR) signaling in response to agonist probably by competing with the negative FLII regulator for MYD88-binding. The sequence is that of Leucine-rich repeat flightless-interacting protein 2 (LRRFIP2) from Homo sapiens (Human).